The following is a 90-amino-acid chain: Bombyxin B-9 (90 aa).

An N-terminal signal peptide occupies residues 1 to 20 (MMKTAVMFILVVVISLTYSS). Disulfide bonds link Cys-30/Cys-75, Cys-42/Cys-88, and Cys-74/Cys-79. Residues 49–64 (GGAQYAPYWQETYLRS) constitute a propeptide, c peptide like.

This sequence belongs to the insulin family. Heterodimer of a B chain and an A chain linked by two disulfide bonds.

It is found in the secreted. Brain peptide responsible for activation of prothoracic glands to produce ecdysone in insects. This is Bombyxin B-9 (BBXB9) from Bombyx mori (Silk moth).